Reading from the N-terminus, the 229-residue chain is uncharacterized protein (229 aa).

7 consecutive transmembrane segments (helical) span residues 21 to 41 (IYSLVGMGVGLSAFVSYLMLY), 56 to 76 (MIYYGAAIIELILVFVASGAA), 83 to 103 (ALPIFLIYSALNGFTLSFIIV), 109 to 129 (TVFQAFLSSAAVFFAMSIIGV), 141 to 161 (AMFAALIGVVVASLINLFIGS), 162 to 182 (GMMSYVISVISVLIFSGLIAS), and 202 to 222 (WAVAMALSLYLDFINLFISLL).

The protein belongs to the BI1 family.

The protein localises to the cell membrane. This is an uncharacterized protein from Streptococcus pyogenes serotype M6 (strain ATCC BAA-946 / MGAS10394).